A 446-amino-acid polypeptide reads, in one-letter code: Alpha-1,6-mannosyl-glycoprotein 2-beta-N-acetylglucosaminyltransferase (446 aa).

Topologically, residues 1–9 (MRFRIYKRK) are cytoplasmic. Residues 10 to 29 (VLILTFVVAACGFVLWSSNG) traverse the membrane as a helical; Signal-anchor for type II membrane protein segment. Over 30–446 (RQRKNEALAP…ELCKSYRRLQ (417 aa)) the chain is Lumenal. Residues Asn-69 and Asn-86 are each glycosylated (N-linked (GlcNAc...) asparagine). Substrate is bound by residues 123–127 (QVHNR) and Asp-154. Cysteines 196 and 210 form a disulfide. Position 229–233 (229–233 (QTKHH)) interacts with substrate. Residue Asp-261 participates in Mn(2+) binding. An intrachain disulfide couples Cys-283 to Cys-286. A substrate-binding site is contributed by Arg-298. Disulfide bonds link Cys-334–Cys-357, Cys-339–Cys-439, and Cys-378–Cys-386. His-374 contacts Mn(2+).

The protein belongs to the glycosyltransferase 16 (GT16) protein family. As to quaternary structure, homodimer. Requires Mn(2+) as cofactor.

Its subcellular location is the golgi apparatus membrane. It catalyses the reaction an N(4)-{beta-D-GlcNAc-(1-&gt;2)-alpha-D-Man-(1-&gt;3)-[alpha-D-Man-(1-&gt;6)]-beta-D-Man-(1-&gt;4)-beta-D-GlcNAc-(1-&gt;4)-beta-D-GlcNAc}-L-asparaginyl-[protein] + UDP-N-acetyl-alpha-D-glucosamine = N(4)-{beta-D-GlcNAc-(1-&gt;2)-alpha-D-Man-(1-&gt;3)-[beta-D-GlcNAc-(1-&gt;2)-alpha-D-Man-(1-&gt;6)]-beta-D-Man-(1-&gt;4)-beta-D-GlcNAc-(1-&gt;4)-beta-D-GlcNAc}-L-asparaginyl-[protein] + UDP + H(+). It participates in protein modification; protein glycosylation. Its function is as follows. Plays an essential role in protein N-glycosylation. Catalyzes the transfer of N-acetylglucosamine (GlcNAc) onto the free terminal mannose moiety in the core structure of the nascent N-linked glycan chain, giving rise to the second branch in complex glycans. In Sus scrofa (Pig), this protein is Alpha-1,6-mannosyl-glycoprotein 2-beta-N-acetylglucosaminyltransferase (MGAT2).